A 109-amino-acid chain; its full sequence is Large ribosomal subunit protein uL22 (109 aa).

The protein belongs to the universal ribosomal protein uL22 family. As to quaternary structure, part of the 50S ribosomal subunit.

In terms of biological role, this protein binds specifically to 23S rRNA; its binding is stimulated by other ribosomal proteins, e.g. L4, L17, and L20. It is important during the early stages of 50S assembly. It makes multiple contacts with different domains of the 23S rRNA in the assembled 50S subunit and ribosome. Functionally, the globular domain of the protein is located near the polypeptide exit tunnel on the outside of the subunit, while an extended beta-hairpin is found that lines the wall of the exit tunnel in the center of the 70S ribosome. In Methylibium petroleiphilum (strain ATCC BAA-1232 / LMG 22953 / PM1), this protein is Large ribosomal subunit protein uL22.